The chain runs to 454 residues: Ribosomal protein uS12 methylthiotransferase RimO (454 aa).

The MTTase N-terminal domain maps to 19 to 129; it reads AKVGFVSLGC…VLAQVHEHVA (111 aa). The [4Fe-4S] cluster site is built by Cys-28, Cys-64, Cys-93, Cys-161, Cys-165, and Cys-168. Positions 147-384 constitute a Radical SAM core domain; it reads LTPKHYAYLK…MAVQAKISSD (238 aa). Residues 387-453 enclose the TRAM domain; sequence QVRIGQEYLI…EHDVWGVRVE (67 aa).

Belongs to the methylthiotransferase family. RimO subfamily. It depends on [4Fe-4S] cluster as a cofactor.

It localises to the cytoplasm. The enzyme catalyses L-aspartate(89)-[ribosomal protein uS12]-hydrogen + (sulfur carrier)-SH + AH2 + 2 S-adenosyl-L-methionine = 3-methylsulfanyl-L-aspartate(89)-[ribosomal protein uS12]-hydrogen + (sulfur carrier)-H + 5'-deoxyadenosine + L-methionine + A + S-adenosyl-L-homocysteine + 2 H(+). Catalyzes the methylthiolation of an aspartic acid residue of ribosomal protein uS12. In Colwellia psychrerythraea (strain 34H / ATCC BAA-681) (Vibrio psychroerythus), this protein is Ribosomal protein uS12 methylthiotransferase RimO.